The primary structure comprises 204 residues: Outer-membrane lipoprotein LolB (204 aa).

An N-terminal signal peptide occupies residues 1-20 (MLRSRRLALLCLATPLWLAA). C21 is lipidated: N-palmitoyl cysteine. A lipid anchor (S-diacylglycerol cysteine) is attached at C21. The interval 131–150 (GRAAPGTPSNVTRDANGRPD) is disordered.

The protein belongs to the LolB family. As to quaternary structure, monomer.

It localises to the cell outer membrane. Its function is as follows. Plays a critical role in the incorporation of lipoproteins in the outer membrane after they are released by the LolA protein. This is Outer-membrane lipoprotein LolB from Cupriavidus metallidurans (strain ATCC 43123 / DSM 2839 / NBRC 102507 / CH34) (Ralstonia metallidurans).